A 201-amino-acid polypeptide reads, in one-letter code: Xanthine phosphoribosyltransferase (201 aa).

Residues Leu-20 and Asn-27 each contribute to the xanthine site. A 5-phospho-alpha-D-ribose 1-diphosphate-binding site is contributed by 129–133; that stretch reads ANGQA. Lys-157 provides a ligand contact to xanthine.

It belongs to the purine/pyrimidine phosphoribosyltransferase family. Xpt subfamily. Homodimer.

The protein localises to the cytoplasm. The enzyme catalyses XMP + diphosphate = xanthine + 5-phospho-alpha-D-ribose 1-diphosphate. It functions in the pathway purine metabolism; XMP biosynthesis via salvage pathway; XMP from xanthine: step 1/1. In terms of biological role, converts the preformed base xanthine, a product of nucleic acid breakdown, to xanthosine 5'-monophosphate (XMP), so it can be reused for RNA or DNA synthesis. This Shouchella clausii (strain KSM-K16) (Alkalihalobacillus clausii) protein is Xanthine phosphoribosyltransferase.